The chain runs to 554 residues: MTPAELSAALRDALTAAVAAGELTLDPADVPAEVRVERPKNRDHGDWATSVALQLAKKAGLPPREVAALVQRRLLEVEGVRAVDIAGPGFLNVTLDAAAAGELARSVVEAGPAFGRSATPTGERINLEFVSANPTGPIHLGGTRWAAVGDSLARVLEAAGATVTREYYFNDHGAQIDRFARSLLARANDEPAPEDGYGGDYVTDIAAAVLAEAPGLLDLPREEQQEVFRREGVELMFAEIRQSLAEFGVEFDVYFHEDSLHTSGAVGRAVQKLRDLGRIYEADGATWLRTSDFGDDKDRVVIKSDGHPAYISGDLAYYLDKRERGFDRCVLMLGADHHGYVPRMMAMCAAFGDTPGVNLEILIGQMVNLLKDGVPVRMSKRAGTVVTMEDLVEAVGVDAARYSLVRSSVDSSIDIDLDLLTRRSNDNPVFYVQYAHARTANVAVNAAAAGVRREDAFDPSLLTEETESLLLAALAEFPAVVARAGELREPHRVARYLEELAGRFHKFYDACRVTPRAGEEVTDVHRTRLWLNDATRQVLANGLGLLGVSSPDRM.

Residues 132-142 (ANPTGPIHLGG) carry the 'HIGH' region motif.

This sequence belongs to the class-I aminoacyl-tRNA synthetase family. Monomer.

The protein resides in the cytoplasm. It carries out the reaction tRNA(Arg) + L-arginine + ATP = L-arginyl-tRNA(Arg) + AMP + diphosphate. In Kineococcus radiotolerans (strain ATCC BAA-149 / DSM 14245 / SRS30216), this protein is Arginine--tRNA ligase.